Here is a 72-residue protein sequence, read N- to C-terminus: uncharacterized protein (72 aa).

Positions 1–53 (MTNEPSTSTPTSTSTSTSTSTSTSTTTLTSTSSTPTSTSTSTSTSTSTSTSTS) are disordered.

This is an uncharacterized protein from Dictyostelium discoideum (Social amoeba).